A 482-amino-acid polypeptide reads, in one-letter code: UDP-glycosyltransferase 86A2 (482 aa).

Residues Ser-297, Cys-355–Gln-357, His-372–Glu-380, and Leu-394–Gln-397 contribute to the UDP-alpha-D-glucose site.

It belongs to the UDP-glycosyltransferase family.

This is UDP-glycosyltransferase 86A2 (UGT86A2) from Arabidopsis thaliana (Mouse-ear cress).